The primary structure comprises 272 residues: Shikimate dehydrogenase (NADP(+)) (272 aa).

Shikimate-binding positions include 14–16 and Thr-61; that span reads SKS. Residue Lys-65 is the Proton acceptor of the active site. Glu-77 contributes to the NADP(+) binding site. 2 residues coordinate shikimate: Asn-86 and Asp-102. NADP(+) contacts are provided by residues 126-130, 149-154, and Met-213; these read GAGGA and NRTVSR. Tyr-215 contacts shikimate. Gly-237 contributes to the NADP(+) binding site.

The protein belongs to the shikimate dehydrogenase family. In terms of assembly, homodimer.

It catalyses the reaction shikimate + NADP(+) = 3-dehydroshikimate + NADPH + H(+). Its pathway is metabolic intermediate biosynthesis; chorismate biosynthesis; chorismate from D-erythrose 4-phosphate and phosphoenolpyruvate: step 4/7. Its function is as follows. Involved in the biosynthesis of the chorismate, which leads to the biosynthesis of aromatic amino acids. Catalyzes the reversible NADPH linked reduction of 3-dehydroshikimate (DHSA) to yield shikimate (SA). This is Shikimate dehydrogenase (NADP(+)) from Escherichia coli O81 (strain ED1a).